The chain runs to 102 residues: Small ribosomal subunit protein uS10 (102 aa).

This sequence belongs to the universal ribosomal protein uS10 family. Part of the 30S ribosomal subunit.

Its function is as follows. Involved in the binding of tRNA to the ribosomes. The protein is Small ribosomal subunit protein uS10 of Bacillus cereus (strain G9842).